The primary structure comprises 579 residues: DNA ligase 1 (579 aa).

E244 contacts ATP. K246 functions as the N6-AMP-lysine intermediate in the catalytic mechanism. ATP-binding residues include R251, R266, E296, F342, R419, and K425.

This sequence belongs to the ATP-dependent DNA ligase family. Requires Mg(2+) as cofactor.

The enzyme catalyses ATP + (deoxyribonucleotide)n-3'-hydroxyl + 5'-phospho-(deoxyribonucleotide)m = (deoxyribonucleotide)n+m + AMP + diphosphate.. DNA ligase that seals nicks in double-stranded DNA during DNA replication, DNA recombination and DNA repair. The sequence is that of DNA ligase 1 from Methanosarcina mazei (strain ATCC BAA-159 / DSM 3647 / Goe1 / Go1 / JCM 11833 / OCM 88) (Methanosarcina frisia).